A 662-amino-acid chain; its full sequence is MIPSQEYRKSVVHQPENVPSGFRGATHWLAGKVHRRQSKQQALLEQAHTIHTAAEAHRTLSLVDLQAQLLSFRDHFRRRARGYEQHISAAMALIVEASHRQLGLRPFPVQIMGALALLEGSLIEMQTGEGKTLVAALAAVFLGWSGRSCHVITVNDYLASRDYARLEPLYTFCGVTASCVIGELKRPERQRSYQAAVVYVTSKELVADFLKDRLLLHGVSDPSRHFLHSSNTLREGDEVPVLNGLWAAIVDEADSVLVDDAATPLIISRPVKNEPLMEACREAVRLAAKLQPTLHYTVEERYKQIALTSEGNATIEQMLPTLPPFWHSATRRNELLLLVLNAREFFRKGKDYVVSDGKVVIIDEFTGRLMPDRKWQKGTQQIVELLEGVEPTDPVEVAARISFQRFFRFYKLLCGMSGTVKGVTAELWHIYSLPYVAIPTNKPSRRTTQAPEYFLEKGAKYAALIATLEALHRQGVPILVGTRSVRESEFLADLLRQKMLNFQLLNAIYHKEEAAIIARAGERGNITIATNMAGRGTDILLEQGVAALGGLHVLLAEPNEAERIDRQFYGRCARQGDPGTSYSYIALDDRLLQRFFPERFLNSVMAEVLLRRLPGSHALMQLLVYLAQQMAQRMAYQQRLSLLRRDEQLDQLMSFAGSGPKF.

Residues Gln110, 128-132 (GEGKT), and Asp538 contribute to the ATP site.

This sequence belongs to the SecA family. In terms of assembly, monomer and homodimer. Part of the essential Sec protein translocation apparatus which comprises SecA, SecYEG and auxiliary proteins SecDF. Other proteins may also be involved.

Its subcellular location is the cell inner membrane. It is found in the cytoplasm. It carries out the reaction ATP + H2O + cellular proteinSide 1 = ADP + phosphate + cellular proteinSide 2.. In terms of biological role, part of the Sec protein translocase complex. Interacts with the SecYEG preprotein conducting channel. Has a central role in coupling the hydrolysis of ATP to the transfer of proteins into and across the cell membrane, serving as an ATP-driven molecular motor driving the stepwise translocation of polypeptide chains across the membrane. The protein is Protein translocase subunit SecA 2 of Chlorobium chlorochromatii (strain CaD3).